Here is a 212-residue protein sequence, read N- to C-terminus: ER lumen protein-retaining receptor 2 (212 aa).

Topologically, residues Met1–Phe4 are lumenal. The chain crosses the membrane as a helical span at residues Arg5 to Trp24. At Lys25–Ile32 the chain is on the cytoplasmic side. Residues Ser33–Phe52 traverse the membrane as a helical segment. The tract at residues Arg47–Tyr48 is interaction with the K-D-E-L motif on target proteins. Residues Thr53–Leu58 are Lumenal-facing. The helical transmembrane segment at Tyr59–Tyr79 threads the bilayer. Over Met80–Thr92 the chain is Cytoplasmic. A helical transmembrane segment spans residues Phe93 to Asn110. Over His111–Leu116 the chain is Lumenal. Residues Glu117 to Leu135 form a helical membrane-spanning segment. Topologically, residues Phe136–Thr149 are cytoplasmic. A helical membrane pass occupies residues His150–Trp168. An interaction with the K-D-E-L motif on target proteins region spans residues Arg159–Arg169. At Arg169–Leu178 the chain is on the lumenal side. The helical transmembrane segment at Ile179–Val199 threads the bilayer. Topologically, residues Thr200–Ala212 are cytoplasmic. Residues Lys204–Lys207 form an important for recycling of cargo proteins with the sequence motif K-D-E-L from the Golgi to the endoplasmic reticulum region.

It belongs to the ERD2 family.

Its subcellular location is the endoplasmic reticulum membrane. It localises to the golgi apparatus membrane. It is found in the cytoplasmic vesicle. The protein resides in the COPI-coated vesicle membrane. In terms of biological role, membrane receptor that binds the K-D-E-L sequence motif in the C-terminal part of endoplasmic reticulum resident proteins and maintains their localization in that compartment by participating to their vesicle-mediated recycling back from the Golgi. Binding is pH dependent, and is optimal at pH 5-5.4. In Gallus gallus (Chicken), this protein is ER lumen protein-retaining receptor 2 (KDELR2).